Reading from the N-terminus, the 319-residue chain is Inositol phosphoceramide mannosyltransferase 1 (319 aa).

The chain crosses the membrane as a helical span at residues 8–28 (LLLKGIPICGVILLILWGYSL). N-linked (GlcNAc...) asparagine glycans are attached at residues Asn-115 and Asn-198. 2 helical membrane passes run 211 to 231 (PTVFLSAGPLFLSYQFCKYLL) and 279 to 299 (VLFFAFLAAFAILFLCLRVVF).

Belongs to the glycosyltransferase 32 family.

The protein resides in the golgi apparatus. The protein localises to the cis-Golgi network membrane. It localises to the trans-Golgi network membrane. With imt2 and imt3, is required for the synthesis of mannosyl phosphorylinositol ceramide (MIPC). Catalyzes the addition of mannosyl to phosphorylinositol ceramide (IPC). MIPC is essential for cell morphology, cell-surface distribution of ergosterol, localization for plasma-membrane transporters, and lipid-raft-mediated endocytosis of plasma membrane proteins to the vacuole. The polypeptide is Inositol phosphoceramide mannosyltransferase 1 (imt1) (Schizosaccharomyces pombe (strain 972 / ATCC 24843) (Fission yeast)).